Reading from the N-terminus, the 236-residue chain is Small ribosomal subunit protein uS2c (236 aa).

Component of the chloroplast small ribosomal subunit (SSU). Mature 70S chloroplast ribosomes of higher plants consist of a small (30S) and a large (50S) subunit. The 30S small subunit contains 1 molecule of ribosomal RNA (16S rRNA) and 24 different proteins. The 50S large subunit contains 3 rRNA molecules (23S, 5S and 4.5S rRNA) and 33 different proteins.

The protein resides in the plastid. It localises to the chloroplast. In terms of biological role, component of the chloroplast ribosome (chloro-ribosome), a dedicated translation machinery responsible for the synthesis of chloroplast genome-encoded proteins, including proteins of the transcription and translation machinery and components of the photosynthetic apparatus. The protein is Small ribosomal subunit protein uS2c (rps2) of Spinacia oleracea (Spinach).